Reading from the N-terminus, the 855-residue chain is Inactive rhomboid protein 1 (855 aa).

The tract at residues 1-35 is disordered; sequence MSEARRDSTSSLQRKKPPWLKLDIPSAAPATAEEP. Topologically, residues 1–411 are cytoplasmic; it reads MSEARRDSTS…HRPFFTYWLT (411 aa). Residues 25-35 show a composition bias toward low complexity; it reads PSAAPATAEEP. Phosphoserine occurs at positions 76 and 176. Threonine 180 and threonine 183 each carry phosphothreonine. A Phosphoserine modification is found at serine 390. Residues 412–432 form a helical membrane-spanning segment; sequence FVHSLVTILAVCIYGIAPVGF. Over 433–655 the chain is Lumenal; sequence SQHETVDSVL…NPEVPDQFYR (223 aa). A glycan (N-linked (GlcNAc...) asparagine) is linked at asparagine 583. A helical transmembrane segment spans residues 656–676; sequence LWLSLFLHAGILHCLVSICFQ. The Cytoplasmic portion of the chain corresponds to 677 to 691; the sequence is MTVLRDLEKLAGWHR. The helical transmembrane segment at 692 to 712 threads the bilayer; the sequence is IAIIYLLSGVTGNLASAIFLP. Topologically, residues 713–714 are lumenal; the sequence is YR. Residues 715 to 735 traverse the membrane as a helical segment; the sequence is AEVGPAGSQFGILACLFVELF. Residues 736-746 are Cytoplasmic-facing; the sequence is QSWQILARPWR. A helical membrane pass occupies residues 747–767; the sequence is AFFKLLAVVLFLFTFGLLPWI. At 768 to 772 the chain is on the lumenal side; the sequence is DNFAH. Residues 773 to 793 traverse the membrane as a helical segment; it reads ISGFISGLFLSFAFLPYISFG. The Cytoplasmic segment spans residues 794–803; that stretch reads KFDLYRKRCQ. Residues 804-824 form a helical membrane-spanning segment; that stretch reads IIVFQVVFLGLLAGLVVLFYV. The Lumenal portion of the chain corresponds to 825-855; the sequence is YPVRCEWCEFLTCIPFTDKFCEKYELDAQLH.

Belongs to the peptidase S54 family. As to quaternary structure, homodimer, or homooligomer. Interacts with TGFA and HBEGF. Interacts with EGF; may retain EGF in the endoplasmic reticulum and regulates its degradation through the endoplasmic reticulum-associated degradation (ERAD). Interacts (via cytoplasmic N-terminus) with FRMD8/iTAP; this interaction leads to mutual protein stabilization. Interacts with ADAM17/TACE.

The protein resides in the endoplasmic reticulum membrane. Its subcellular location is the golgi apparatus membrane. Regulates ADAM17 protease, a sheddase of the epidermal growth factor (EGF) receptor ligands and TNF, thereby plays a role in sleep, cell survival, proliferation, migration and inflammation. Does not exhibit any protease activity on its own. The chain is Inactive rhomboid protein 1 (RHBDF1) from Callithrix jacchus (White-tufted-ear marmoset).